The following is a 134-amino-acid chain: T-cell receptor beta chain V region CTL-F3 (134 aa).

The N-terminal stretch at 1-19 is a signal peptide; that stretch reads MAPRLLFCLVLCFLRAEPT. Positions 20–115 are v segment; sequence NAGVIQTPRH…SAVYLCASSL (96 aa). Cysteines 42 and 111 form a disulfide. A glycan (N-linked (GlcNAc...) asparagine) is linked at Asn90. Residues 116-119 form a d segment region; that stretch reads STGV. The tract at residues 120-134 is j segment; that stretch reads SYEQYFGPGTRLTVL.

The protein is T-cell receptor beta chain V region CTL-F3 of Mus musculus (Mouse).